Consider the following 197-residue polypeptide: dTTP/UTP pyrophosphatase (197 aa).

D70 acts as the Proton acceptor in catalysis.

Belongs to the Maf family. YhdE subfamily. A divalent metal cation serves as cofactor.

The protein resides in the cytoplasm. It catalyses the reaction dTTP + H2O = dTMP + diphosphate + H(+). It carries out the reaction UTP + H2O = UMP + diphosphate + H(+). Functionally, nucleoside triphosphate pyrophosphatase that hydrolyzes dTTP and UTP. May have a dual role in cell division arrest and in preventing the incorporation of modified nucleotides into cellular nucleic acids. The protein is dTTP/UTP pyrophosphatase of Pectobacterium atrosepticum (strain SCRI 1043 / ATCC BAA-672) (Erwinia carotovora subsp. atroseptica).